A 190-amino-acid chain; its full sequence is Putative manganese efflux pump MntP (190 aa).

A run of 6 helical transmembrane segments spans residues 3-23, 37-57, 72-88, 111-131, 138-158, and 164-184; these read FLQI…CSVV, LVLA…GWVI, HWIA…KMIW, IILG…LAFV, VALS…WIGH, and FGKW…ANIV.

Belongs to the MntP (TC 9.B.29) family.

The protein resides in the cell membrane. Probably functions as a manganese efflux pump. The polypeptide is Putative manganese efflux pump MntP (Corynebacterium glutamicum (strain R)).